The following is a 204-amino-acid chain: Terpene cyclase trt1 (204 aa).

5 helical membrane passes run 44-64, 67-87, 103-122, 132-154, and 169-189; these read FMSICCDVAWEFVYAFVYPIA, HWAGGIRIWFAMHCVMLFIVA, FARLAYVAITIGFMAGHLAL, FFWSGALCQITASLGSLCLLVCR, and WFYIAITLTLDAIYPVFFFYF.

The protein belongs to the paxB family.

It localises to the membrane. It participates in secondary metabolite biosynthesis; terpenoid biosynthesis. Terpene cyclase; part of the gene cluster that mediates the biosynthesis of terretonin, a fungal meroterpenoid that acts as a mycotoxin. The first step of the pathway is the synthesis of 3,5-dimethylorsellinic acid (DMOA) by the polyketide synthase trt4. DMOA is then prenylated into farnesyl-DMOA by the polyprenyl transferase trt2. Methylation by the methyltransferase trt5 then leads to farnesyl-DMOA methyl ester which is further subject to epoxidation by the FAD-dependent monooxygenase trt8 to yield epoxyfarnesyl-DMOA methyl ester. Cyclization of epoxyfarnesyl-DMOA methyl ester by the terpene cyclase trt1 leads to a tetracycle intermediate which is in turn converted to preterretonin. Dehydrogenase trt9 comes next to transform preterretonin to preterrenoid. The FAD-dependent monooxygenase trt3 is then required for the C-hydroxylation at C16 of preterrenoid to yield terrenoid. The cytochrome P450 trt6 catalyzes three successive oxidations to transform terrenoid into an unstable intermediate, which then undergoes the D-ring expansion and unusual rearrangement of the methoxy group to afford the core skeleton of terretonin. Trt14 catalyzes the D-ring expansion of terretonin involving intramolecular methoxy rearrangement as well as the hydrolysis of the expanded D-ring and the methyl ester moiety. Finally, the nonheme iron-dependent dioxygenase trt7 accomplishes the last two oxidation reactions steps to complete the biosynthesis of terretonin. Terretonin C is produced via spontaneous decarboxylation of the terretonin precursor. Another shunt product of the terretonin biosynthesis is dihydrofarnesyl-DMOA, derived from epoxyfarnesyl-DMOA through hydrolysis of the epoxide. This is Terpene cyclase trt1 from Aspergillus terreus (strain NIH 2624 / FGSC A1156).